A 288-amino-acid chain; its full sequence is Type II restriction enzyme DpnII (288 aa).

It belongs to the DpnII type II restriction endonuclease family. In terms of assembly, homodimer.

The catalysed reaction is Endonucleolytic cleavage of DNA to give specific double-stranded fragments with terminal 5'-phosphates.. A P subtype restriction enzyme that recognizes the double-stranded unmethylated sequence 5'-GATC-3' and cleaves before G-1. In Streptococcus pneumoniae, this protein is Type II restriction enzyme DpnII.